The following is a 160-amino-acid chain: Nitrate reductase [NADH] (160 aa).

T37 lines the FAD pocket.

The protein belongs to the nitrate reductase family. Homodimer. The cofactor is FAD. It depends on heme as a cofactor. Requires Mo-molybdopterin as cofactor.

The enzyme catalyses nitrite + NAD(+) + H2O = nitrate + NADH + H(+). Functionally, nitrate reductase is a key enzyme involved in the first step of nitrate assimilation in plants, fungi and bacteria. This Lotus tetragonolobus (Winged pea) protein is Nitrate reductase [NADH] (NIA).